The primary structure comprises 684 residues: Protein SEEDLING PLASTID DEVELOPMENT 1 (684 aa).

The transit peptide at M1–S78 directs the protein to the chloroplast. The segment at S33 to A91 is disordered. Residues A50–P88 are compositionally biased toward low complexity. G220 to T227 contacts ATP. The interval P651–D684 is disordered. The span at K657–S667 shows a compositional bias: low complexity.

The protein belongs to the ycf45 family.

It is found in the plastid. The protein resides in the chloroplast membrane. The protein localises to the chloroplast envelope. Functionally, required during eoplast (a highly reduced plastid type present during the degreening and dehydration stages of seed maturation) development in embryos and early stages of eoplast redifferentiation during seedling growth. In Arabidopsis thaliana (Mouse-ear cress), this protein is Protein SEEDLING PLASTID DEVELOPMENT 1.